A 147-amino-acid polypeptide reads, in one-letter code: Large ribosomal subunit protein uL16 (147 aa).

Belongs to the universal ribosomal protein uL16 family. Part of the 50S ribosomal subunit.

Binds 23S rRNA and is also seen to make contacts with the A and possibly P site tRNAs. In Clostridium botulinum (strain ATCC 19397 / Type A), this protein is Large ribosomal subunit protein uL16.